We begin with the raw amino-acid sequence, 357 residues long: Aurora kinase A- and ninein-interacting protein (357 aa).

Over residues 72–93 (TSQQGKTNGADQRSVSSHTESQ) the composition is skewed to polar residues. A disordered region spans residues 72–102 (TSQQGKTNGADQRSVSSHTESQTNKESKEDA). Positions 189–357 (QKEGEDSSCE…EGNQVIRHQA (169 aa)) are interaction with AURKA. The segment at 281 to 357 (KDSWSQLFTE…EGNQVIRHQA (77 aa)) is interaction with RBBP8/CtIP. Ser-292 carries the phosphoserine modification.

Belongs to the AUNIP family. In terms of assembly, interacts (via C-terminus) with AURKA (via C-terminus). Interacts (via N-terminus) with NIN; this interaction blocks NIN phosphorylation by both AURKA and GSK3B. Identified in a complex with NIN and AURKA. Interacts with RBBP8/CtIP.

Its subcellular location is the nucleus. The protein localises to the chromosome. It localises to the cytoplasm. It is found in the cytoskeleton. The protein resides in the microtubule organizing center. Its subcellular location is the centrosome. The protein localises to the spindle pole. Its function is as follows. DNA-binding protein that accumulates at DNA double-strand breaks (DSBs) following DNA damage and promotes DNA resection and homologous recombination. Serves as a sensor of DNA damage: binds DNA with a strong preference for DNA substrates that mimic structures generated at stalled replication forks, and anchors RBBP8/CtIP to DSB sites to promote DNA end resection and ensuing homologous recombination repair. Inhibits non-homologous end joining (NHEJ). Required for the dynamic movement of AURKA at the centrosomes and spindle apparatus during the cell cycle. In Bos taurus (Bovine), this protein is Aurora kinase A- and ninein-interacting protein.